A 651-amino-acid chain; its full sequence is Coronin-like protein (651 aa).

WD repeat units lie at residues Gly-79 to Asp-110, Gly-138 to Asn-169, Lys-180 to Asn-210, and Ala-226 to Asp-257. The interval Ala-408 to Lys-609 is disordered. The segment covering Leu-427–Ala-451 has biased composition (basic and acidic residues). Ser-441, Ser-454, and Ser-456 each carry phosphoserine. Over residues Pro-452–Ser-465 the composition is skewed to low complexity. Residues Thr-517 and Thr-529 each carry the phosphothreonine modification. 2 stretches are compositionally biased toward basic and acidic residues: residues Glu-523–Pro-540 and Thr-547–Lys-572. Phosphoserine is present on residues Ser-573 and Ser-579. A compositionally biased stretch (low complexity) spans Ser-578 to Ser-590. The stretch at Val-618–Ser-650 forms a coiled coil.

Belongs to the WD repeat coronin family. In terms of assembly, binds to F-actin.

This is Coronin-like protein (CRN1) from Saccharomyces cerevisiae (strain ATCC 204508 / S288c) (Baker's yeast).